Here is a 647-residue protein sequence, read N- to C-terminus: Threonine--tRNA ligase (647 aa).

The 61-residue stretch at methionine 1 to threonine 61 folds into the TGS domain. The interval aspartate 242–proline 540 is catalytic. 3 residues coordinate Zn(2+): cysteine 336, histidine 387, and histidine 517.

Belongs to the class-II aminoacyl-tRNA synthetase family. As to quaternary structure, homodimer. Zn(2+) is required as a cofactor.

Its subcellular location is the cytoplasm. The enzyme catalyses tRNA(Thr) + L-threonine + ATP = L-threonyl-tRNA(Thr) + AMP + diphosphate + H(+). In terms of biological role, catalyzes the attachment of threonine to tRNA(Thr) in a two-step reaction: L-threonine is first activated by ATP to form Thr-AMP and then transferred to the acceptor end of tRNA(Thr). Also edits incorrectly charged L-seryl-tRNA(Thr). The polypeptide is Threonine--tRNA ligase (Streptococcus pneumoniae (strain 70585)).